The chain runs to 253 residues: Claudin domain-containing protein 1 (253 aa).

The helical transmembrane segment at 5–25 (FATAFVIACVLSLISTIYMAA) threads the bilayer. Residues Asn-42 and Asn-72 are each glycosylated (N-linked (GlcNAc...) asparagine). The next 3 helical transmembrane spans lie at 141–161 (FLLPFVSLGLMCFGALIGLCA), 175–195 (ILHLLAGLCTLGSVSCYVAGI), and 216–236 (FCLACVSAPLQFMAAALFIWA).

The protein belongs to the PMP-22/EMP/MP20 family. As to expression, in the brain, highly expressed in endothelial cells of the cerebellum compared to other regions (at protein level).

It localises to the cell junction. The protein resides in the tight junction. Its subcellular location is the cell membrane. In terms of biological role, plays a role in negatively regulating the permeability of cells to small molecules. This Mus musculus (Mouse) protein is Claudin domain-containing protein 1 (Cldnd1).